Consider the following 320-residue polypeptide: Cytochrome f (320 aa).

The N-terminal stretch at 1 to 35 is a signal peptide; sequence MQNRNTFSWVKEQMTRSISVSIIIYVITRTSISNA. Positions 36, 56, 59, and 60 each coordinate heme. A helical transmembrane segment spans residues 286 to 306; it reads VQGLLFFLASIILAQIFLVLK.

The protein belongs to the cytochrome f family. In terms of assembly, the 4 large subunits of the cytochrome b6-f complex are cytochrome b6, subunit IV (17 kDa polypeptide, petD), cytochrome f and the Rieske protein, while the 4 small subunits are PetG, PetL, PetM and PetN. The complex functions as a dimer. Requires heme as cofactor.

The protein localises to the plastid. Its subcellular location is the chloroplast thylakoid membrane. Functionally, component of the cytochrome b6-f complex, which mediates electron transfer between photosystem II (PSII) and photosystem I (PSI), cyclic electron flow around PSI, and state transitions. The protein is Cytochrome f of Chloranthus spicatus (Chulantree).